We begin with the raw amino-acid sequence, 602 residues long: Sodium-independent sulfate anion transporter (602 aa).

The Extracellular segment spans residues 1 to 47 (MSPPMSPMKPPKGFAPMSCCWSTETMQKWLPFLGWLPDYTWYALKMD). The helical transmembrane segment at 48–68 (FIAGISVGLTVIPQALAYAEV) threads the bilayer. A topological domain (cytoplasmic) is located at residue Ala69. The chain crosses the membrane as a helical span at residues 70 to 90 (GLPPQYGLYSAFMGCFVYFFL). Topologically, residues 91 to 115 (GTSRDVTLGPTAIMSLLVSFYTFHE) are extracellular. Residues 116–136 (PAYAVLLAFLTGCIQLGMGFL) traverse the membrane as a helical segment. At 137–143 (RLGLLLD) the chain is on the cytoplasmic side. Residues 144 to 164 (FISCPVIKGFTSAAAIIIGFG) traverse the membrane as a helical segment. The Extracellular portion of the chain corresponds to 165–193 (QIKNLLGLQHIPRQFFLQVYYTFHNIGET). A helical transmembrane segment spans residues 194-214 (RVGDAVLGLVCMVLLLVLKLM). Residues 215-246 (RDHVPPVHPEMPTGVRLSHGLVWTATTARNAL) lie on the Cytoplasmic side of the membrane. The helical transmembrane segment at 247–267 (VVSFAALVAYSFQVTGYQPFV) threads the bilayer. At 268 to 300 (LTGKTPEGLPDAHIPPFSVTTANGTISFTEMVQ) the chain is on the extracellular side. The chain crosses the membrane as a helical span at residues 301–321 (GMGAGLVVVPLMGLLESIAVA). Residues 322-337 (KSFASQNNYRINSNQE) lie on the Cytoplasmic side of the membrane. A helical transmembrane segment spans residues 338 to 358 (LLALGFTNILGSLFSSYPVTG). Over 359–370 (SFGRTAVNAQSG) the chain is Extracellular. A helical transmembrane segment spans residues 371-391 (VCTPAGGLMTGALVLLSLDYL). Over 392–394 (TSL) the chain is Cytoplasmic. A helical membrane pass occupies residues 395–415 (FYYIPKSALAAVIIMAVVPLF). The Extracellular segment spans residues 416-438 (DTKIVKTLWRVKRLDLLPLCVTF). The chain crosses the membrane as a helical span at residues 439-459 (LLCFWEVQYGILAGTLVSVLI). The Cytoplasmic portion of the chain corresponds to 460–602 (LLHSVARPKI…PEHKIALLKA (143 aa)). The STAS domain occupies 466-580 (RPKIQVSEGP…EAEKYLKQEP (115 aa)).

It belongs to the SLC26A/SulP transporter (TC 2.A.53) family.

The protein localises to the cell membrane. Its subcellular location is the lysosome membrane. The protein resides in the apical cell membrane. It localises to the basolateral cell membrane. The enzyme catalyses hydrogencarbonate(in) + chloride(out) = hydrogencarbonate(out) + chloride(in). The catalysed reaction is sulfate(in) + H(+)(in) = sulfate(out) + H(+)(out). It carries out the reaction oxalate(in) + chloride(out) = oxalate(out) + chloride(in). Its function is as follows. Sodium-independent anion exchanger mediating bicarbonate, chloride, sulfate and oxalate transport. Exhibits sodium-independent sulfate anion transporter activity that may cooperate with SLC26A2 to mediate DIDS-sensitive sulfate uptake into high endothelial venules endothelial cells (HEVEC). In the kidney, mediates chloride-bicarbonate exchange, facilitating V-ATPase-mediated acid secretion. May function as a chloride channel, playing an important role in moderating chloride homeostasis and neuronal activity in the cerebellum. In Bos taurus (Bovine), this protein is Sodium-independent sulfate anion transporter.